A 79-amino-acid chain; its full sequence is uncharacterized protein (79 aa).

Residues 53 to 73 (LFFAYMVAYIGFGILSIGMIV) traverse the membrane as a helical segment.

The protein resides in the membrane. This is an uncharacterized protein from Escherichia coli O157:H7.